The primary structure comprises 122 residues: Large ribosomal subunit protein uL18 (122 aa).

The protein belongs to the universal ribosomal protein uL18 family. As to quaternary structure, part of the 50S ribosomal subunit; part of the 5S rRNA/L5/L18/L25 subcomplex. Contacts the 5S and 23S rRNAs.

In terms of biological role, this is one of the proteins that bind and probably mediate the attachment of the 5S RNA into the large ribosomal subunit, where it forms part of the central protuberance. This Ruminiclostridium cellulolyticum (strain ATCC 35319 / DSM 5812 / JCM 6584 / H10) (Clostridium cellulolyticum) protein is Large ribosomal subunit protein uL18.